We begin with the raw amino-acid sequence, 463 residues long: Annexin A7 (463 aa).

Residues 1 to 18 show a composition bias toward pro residues; the sequence is MSYPGYPPTGYPPFPGYP. Disordered stretches follow at residues 1–34 and 77–149; these read MSYP…QYPY and SPGG…MTQG. Residues 1–143 are repeat-rich region; that stretch reads MSYPGYPPTG…GGQAPYPSQP (143 aa). Residues 5–20 form a 3 X 5 AA tandem repeats of G-Y-P-P-X region; sequence GYPPTGYPPFPGYPPA. Over residues 86–99 the composition is skewed to gly residues; sequence GGQGFGAPPGGAGF. Annexin repeat units follow at residues 160–231, 232–303, 315–387, and 391–462; these read FDAM…ALFM, PSTY…SMCQ, QMAQ…TILQ, and NRPA…AIVG. K208 is modified (N6-acetyllysine).

The protein belongs to the annexin family. In terms of assembly, interacts with PDCD6.

Its function is as follows. Calcium/phospholipid-binding protein which promotes membrane fusion and is involved in exocytosis. This chain is Annexin A7 (Anxa7), found in Mus musculus (Mouse).